A 468-amino-acid polypeptide reads, in one-letter code: Aldehyde dehydrogenase family 3 member B1 (468 aa).

Met-1 is modified (N-acetylmethionine). Gly-188–Gly-193 contacts NAD(+). Catalysis depends on residues Glu-210 and Cys-244. 2 S-palmitoyl cysteine lipidation sites follow: Cys-462 and Cys-463. Cys-465 carries the cysteine methyl ester modification. A lipid anchor (S-geranylgeranyl cysteine) is attached at Cys-465. Positions Thr-466–Leu-468 are cleaved as a propeptide — removed in mature form.

This sequence belongs to the aldehyde dehydrogenase family. In terms of processing, dually lipidated in the C-terminus; prenylation occurs prior to, and is a prerequisite for palmitoylation. It is also required for activity towards long-chain substrates.

The protein localises to the cell membrane. It catalyses the reaction an aldehyde + NAD(+) + H2O = a carboxylate + NADH + 2 H(+). The enzyme catalyses a long-chain fatty aldehyde + NAD(+) + H2O = a long-chain fatty acid + NADH + 2 H(+). The catalysed reaction is a medium-chain fatty aldehyde + NAD(+) + H2O = a medium-chain fatty acid + NADH + 2 H(+). It carries out the reaction octanal + NAD(+) + H2O = octanoate + NADH + 2 H(+). It catalyses the reaction nonanal + NAD(+) + H2O = nonanoate + NADH + 2 H(+). The enzyme catalyses hexadecanoate + NADH + 2 H(+) = hexadecanal + NAD(+) + H2O. The catalysed reaction is (2E)-octenal + NAD(+) + H2O = (2E)-octenoate + NADH + 2 H(+). It carries out the reaction (E)-non-2-enal + NAD(+) + H2O = (E)-non-2-enoate + NADH + 2 H(+). It catalyses the reaction (E)-4-hydroxynon-2-enal + NAD(+) + H2O = (E)-4-hydroxynon-2-enoate + NADH + 2 H(+). The enzyme catalyses (2E)-hexadecenal + NAD(+) + H2O = (E)-hexadec-2-enoate + NADH + 2 H(+). The catalysed reaction is benzaldehyde + NAD(+) + H2O = benzoate + NADH + 2 H(+). It carries out the reaction an aldehyde + NADP(+) + H2O = a carboxylate + NADPH + 2 H(+). It catalyses the reaction a medium-chain fatty aldehyde + NADP(+) + H2O = a medium-chain fatty acid + NADPH + 2 H(+). The enzyme catalyses hexanal + NADP(+) + H2O = hexanoate + NADPH + 2 H(+). The catalysed reaction is octanal + NADP(+) + H2O = octanoate + NADPH + 2 H(+). It carries out the reaction nonanal + NADP(+) + H2O = nonanoate + NADPH + 2 H(+). It catalyses the reaction (2E)-octenal + NADP(+) + H2O = (2E)-octenoate + NADPH + 2 H(+). The enzyme catalyses (E)-non-2-enal + NADP(+) + H2O = (E)-non-2-enoate + NADPH + 2 H(+). The catalysed reaction is (E)-4-hydroxynon-2-enal + NADP(+) + H2O = (E)-4-hydroxynon-2-enoate + NADPH + 2 H(+). It carries out the reaction benzaldehyde + NADP(+) + H2O = benzoate + NADPH + 2 H(+). It participates in alcohol metabolism; ethanol degradation; acetate from ethanol: step 2/2. Oxidizes medium and long chain saturated and unsaturated fatty aldehydes generated in the plasma membrane into non-toxic fatty acids. May have a protective role against the cytotoxicity induced by lipid peroxidation. Short-chain fatty aldehydes are not good substrates. Can use both NADP(+) and NAD(+) as electron acceptor in vitro, however in vivo preference will depend on their tissue levels. Low activity towards acetaldehyde and 3,4-dihydroxyphenylacetaldehyde. Able to metabolize aromatic aldehydes such as benzaldehyde to their acid form. This chain is Aldehyde dehydrogenase family 3 member B1 (Aldh3b1), found in Rattus norvegicus (Rat).